Consider the following 457-residue polypeptide: Multidrug resistance protein MdtK (457 aa).

Transmembrane regions (helical) follow at residues 11 to 31 (LLAL…MGVV), 53 to 73 (IWLP…PIIA), 93 to 113 (WLAI…KFLI), 127 to 147 (AVGF…YQVL), 160 to 180 (GMVI…IFIY), 188 to 208 (LGGV…FLLM), 243 to 263 (LPIA…ALLI), 280 to 300 (FSSL…IRVG), 316 to 336 (YTGI…SIIL), 357 to 377 (LMLF…GAGV), 387 to 407 (IFYI…YILG), and 418 to 438 (PQGF…MIFA).

Belongs to the multi antimicrobial extrusion (MATE) (TC 2.A.66.1) family. MdtK subfamily.

The protein localises to the cell inner membrane. Its function is as follows. Multidrug efflux pump that functions probably as a Na(+)/drug antiporter. The sequence is that of Multidrug resistance protein MdtK from Photorhabdus laumondii subsp. laumondii (strain DSM 15139 / CIP 105565 / TT01) (Photorhabdus luminescens subsp. laumondii).